The following is a 309-amino-acid chain: 15-cis-phytoene synthase (309 aa).

The interval 290–309 is disordered; it reads LTSRMRAHPPRPAHLWQRPL.

It belongs to the phytoene/squalene synthase family. ATP is required as a cofactor. Requires Mn(2+) as cofactor. It depends on Mg(2+) as a cofactor.

It catalyses the reaction 2 (2E,6E,10E)-geranylgeranyl diphosphate = 15-cis-phytoene + 2 diphosphate. Its pathway is carotenoid biosynthesis; phytoene biosynthesis. Inhibited by phosphate ions and squalestatin. Functionally, involved in the biosynthesis of carotenoids. Catalyzes the condensation of two molecules of geranylgeranyl diphosphate (GGPP) to give prephytoene diphosphate (PPPP) and the subsequent rearrangement of the cyclopropylcarbinyl intermediate to yield the 15-cis-phytoene isomer. This Pantoea ananas (Erwinia uredovora) protein is 15-cis-phytoene synthase (crtB).